The primary structure comprises 317 residues: MSVRLGIVMDPIARINFKKDSSLAMLLAAQARGWSLFYMEQQDLYQKAGVARGRMRPLKVFNDASRWFELEAESDQPLHELDVILMRKDPPFDNEFVYSTYLLEQAERAGALVVNRPQSLRDCNEKFFATQFTQCTPPTMVSRRSDILREFAAEHRDIILKPLDGMGGSSIFRHREGDPNLSVILETLTQHGSQQIMAQRYLPEIKDGDKRILMIDGEPVPYCLARIPAQGETRGNLAAGGRGVAQPLSERDRWIAAEVGPHLRERGLLFVGLDVIGDYLTEINVTSPTCIREIDQAFDTRIGDKLMDAIAAQLAAR.

An ATP-grasp domain is found at 126–311 (KFFATQFTQC…IGDKLMDAIA (186 aa)). 152–208 (AAEHRDIILKPLDGMGGSSIFRHREGDPNLSVILETLTQHGSQQIMAQRYLPEIKDG) lines the ATP pocket. The Mg(2+) site is built by Glu282 and Asn284.

The protein belongs to the prokaryotic GSH synthase family. Requires Mg(2+) as cofactor. It depends on Mn(2+) as a cofactor.

It catalyses the reaction gamma-L-glutamyl-L-cysteine + glycine + ATP = glutathione + ADP + phosphate + H(+). The protein operates within sulfur metabolism; glutathione biosynthesis; glutathione from L-cysteine and L-glutamate: step 2/2. The protein is Glutathione synthetase of Pseudomonas aeruginosa (strain ATCC 15692 / DSM 22644 / CIP 104116 / JCM 14847 / LMG 12228 / 1C / PRS 101 / PAO1).